We begin with the raw amino-acid sequence, 319 residues long: 1-aminocyclopropane-1-carboxylate oxidase (319 aa).

The Fe2OG dioxygenase domain maps to 153-253 (PTFGTKVSNY…RMSIASFYNP (101 aa)). The Fe cation site is built by His177, Asp179, and His234.

Belongs to the iron/ascorbate-dependent oxidoreductase family. Fe cation serves as cofactor.

The catalysed reaction is 1-aminocyclopropane-1-carboxylate + L-ascorbate + O2 = ethene + L-dehydroascorbate + hydrogen cyanide + CO2 + 2 H2O. It functions in the pathway alkene biosynthesis; ethylene biosynthesis via S-adenosyl-L-methionine; ethylene from S-adenosyl-L-methionine: step 2/2. The protein is 1-aminocyclopropane-1-carboxylate oxidase (ACO) of Actinidia deliciosa (Kiwi).